The chain runs to 355 residues: 3-dehydroquinate synthase (355 aa).

NAD(+) contacts are provided by residues 71–76 (EGEERK), 105–109 (GVVGD), 129–130 (TS), K142, and K151. E184, H246, and H263 together coordinate Zn(2+).

Belongs to the sugar phosphate cyclases superfamily. Dehydroquinate synthase family. The cofactor is Co(2+). Zn(2+) serves as cofactor. NAD(+) is required as a cofactor.

The protein resides in the cytoplasm. It catalyses the reaction 7-phospho-2-dehydro-3-deoxy-D-arabino-heptonate = 3-dehydroquinate + phosphate. Its pathway is metabolic intermediate biosynthesis; chorismate biosynthesis; chorismate from D-erythrose 4-phosphate and phosphoenolpyruvate: step 2/7. Catalyzes the conversion of 3-deoxy-D-arabino-heptulosonate 7-phosphate (DAHP) to dehydroquinate (DHQ). The polypeptide is 3-dehydroquinate synthase (Streptococcus pneumoniae serotype 19F (strain G54)).